We begin with the raw amino-acid sequence, 246 residues long: tRNA pseudouridine synthase A (246 aa).

Asp-53 functions as the Nucleophile in the catalytic mechanism. Tyr-111 is a binding site for substrate.

It belongs to the tRNA pseudouridine synthase TruA family. As to quaternary structure, homodimer.

It carries out the reaction uridine(38/39/40) in tRNA = pseudouridine(38/39/40) in tRNA. In terms of biological role, formation of pseudouridine at positions 38, 39 and 40 in the anticodon stem and loop of transfer RNAs. This chain is tRNA pseudouridine synthase A, found in Anoxybacillus flavithermus (strain DSM 21510 / WK1).